We begin with the raw amino-acid sequence, 1642 residues long: Cobra venom factor (1642 aa).

The N-terminal stretch at 1–22 (MERMALYLVAALLIGFPGSSHG) is a signal peptide. N-linked (GlcNAc...) asparagine glycosylation is found at Asn153, Asn158, and Asn209. Mg(2+) contacts are provided by Pro516, Asp539, Val540, and Asp542. Disulfide bonds link Cys544–Cys801, Cys609–Cys644, Cys677–Cys704, Cys678–Cys711, Cys691–Cys712, Cys857–Cys1492, Cys1340–Cys1468, Cys1368–Cys1437, Cys1485–Cys1490, Cys1497–Cys1569, Cys1516–Cys1640, and Cys1616–Cys1625. Residues 650-732 (RRRRSSVLLL…QRESELFLAR (83 aa)) constitute a propeptide that is removed on maturation. A C3a-like domain region spans residues 654–732 (SSVLLLDSNA…QRESELFLAR (79 aa)). Positions 677–712 (CCEDVMHENPMGYTCEKRAKYIQEGDACKAAFLECC) constitute an Anaphylatoxin-like domain. The interval 736-747 (EDGFIADSDIIS) is factor B binding site. Residues 985-1263 (HLIITPSGCG…VMAFQALAEY (279 aa)) constitute a propeptide that is removed on maturation. A C3d-like domain region spans residues 985 to 1263 (HLIITPSGCG…VMAFQALAEY (279 aa)). Positions 993-996 (CGEQ) form a cross-link, isoglutamyl cysteine thioester (Cys-Gln). The factor H binding site stretch occupies residues 1190–1253 (VLMAASTGRD…GETYGQTQAT (64 aa)). A glycan (N-linked (GlcNAc...) asparagine) is linked at Asn1346. One can recognise an NTR domain in the interval 1497–1640 (CSSLNHQERI…FSYTLTEFGC (144 aa)).

The protein belongs to the venom complement C3 homolog family. Heterotrimer of alpha, beta and gamma chains; disulfide-linked. Is active with factor B in the presence of factor D. In terms of processing, first processed by the removal of 4 Arg residues by furin-type protease, forming two chains, alpha and gamma/beta precursor, linked by a disulfide bond. Probably, the cobrin cleaves the C3a-like domain and then the C3d-like domain, generating the mature cobra venom factor (CVF). This mature CVF is composed of three chains: alpha, gamma and beta. Contains 3 N-linked oligosaccharide chains, two in the alpha-chain and one in the beta-chain. Glycosylation is not required for the biological activity. However, it contributes to the immunogenicity of CVF. The carbohydrate content is 7.4. The major oligosaccharide is a symmetric fucosylated biantennary complex-type chain with an unusual alpha-galactosylated Le(x) structure at its non-reducing end. In terms of tissue distribution, expressed by the venom gland.

Its subcellular location is the secreted. In terms of biological role, complement-activating protein in cobra venom. It is a structural and functional analog of complement component C3b, the activated form of C3. It binds factor B (CFB), which is subsequently cleaved by factor D (CFD) to form the bimolecular complex CVF/Bb. CVF/Bb is a C3/C5 convertase that cleaves both complement components C3 and C5. Structurally, it resembles the C3b degradation product C3c, which is not able to form a C3/C5 convertase. Unlike C3b/Bb, CVF/Bb is a stable complex and completely resistant to the actions of complement regulatory factors H (CFH) and I (CFI). Therefore, CVF continuously activates complement resulting in the depletion of complement activity. This chain is Cobra venom factor, found in Naja kaouthia (Monocled cobra).